The following is a 954-amino-acid chain: Glycine dehydrogenase (decarboxylating) (954 aa).

K706 carries the N6-(pyridoxal phosphate)lysine modification.

It belongs to the GcvP family. The glycine cleavage system is composed of four proteins: P, T, L and H. Pyridoxal 5'-phosphate is required as a cofactor.

The enzyme catalyses N(6)-[(R)-lipoyl]-L-lysyl-[glycine-cleavage complex H protein] + glycine + H(+) = N(6)-[(R)-S(8)-aminomethyldihydrolipoyl]-L-lysyl-[glycine-cleavage complex H protein] + CO2. In terms of biological role, the glycine cleavage system catalyzes the degradation of glycine. The P protein binds the alpha-amino group of glycine through its pyridoxal phosphate cofactor; CO(2) is released and the remaining methylamine moiety is then transferred to the lipoamide cofactor of the H protein. The sequence is that of Glycine dehydrogenase (decarboxylating) from Thermosynechococcus vestitus (strain NIES-2133 / IAM M-273 / BP-1).